A 267-amino-acid polypeptide reads, in one-letter code: MVKIAVCGAAGRMGGRIIAAVKEAEGVEICGALERPGHPMVGQDAGYNAGLGAIGVAISDDLNAVVQACDVLIDFTAPKVSLKNLEVCALYGKSIVIGSTGFTPEERALAAELARDIPVIIAPNMSVGVNVCFKVLADVAKILGEDFDVEIVESHHRLKKDSPSGTAVRMGEVVAGALGRDYNKVANYHREGICGERTHDEIGMQTVRGGDIVGEHTVYFIGMGERIEITHRAHTRDMFSRGSVRAAKWVVTAKQGVYDMQDVLGLR.

NAD(+) is bound by residues 8–13 (GAAGRM) and E34. R35 serves as a coordination point for NADP(+). Residues 98 to 100 (GST) and 122 to 125 (APNM) each bind NAD(+). H155 acts as the Proton donor/acceptor in catalysis. H156 serves as a coordination point for (S)-2,3,4,5-tetrahydrodipicolinate. The active-site Proton donor is K159. (S)-2,3,4,5-tetrahydrodipicolinate is bound at residue 165-166 (GT).

The protein belongs to the DapB family.

Its subcellular location is the cytoplasm. The catalysed reaction is (S)-2,3,4,5-tetrahydrodipicolinate + NAD(+) + H2O = (2S,4S)-4-hydroxy-2,3,4,5-tetrahydrodipicolinate + NADH + H(+). It carries out the reaction (S)-2,3,4,5-tetrahydrodipicolinate + NADP(+) + H2O = (2S,4S)-4-hydroxy-2,3,4,5-tetrahydrodipicolinate + NADPH + H(+). It participates in amino-acid biosynthesis; L-lysine biosynthesis via DAP pathway; (S)-tetrahydrodipicolinate from L-aspartate: step 4/4. Catalyzes the conversion of 4-hydroxy-tetrahydrodipicolinate (HTPA) to tetrahydrodipicolinate. This is 4-hydroxy-tetrahydrodipicolinate reductase from Geobacter sp. (strain M21).